Reading from the N-terminus, the 420-residue chain is Gamma-glutamyl phosphate reductase (420 aa).

Belongs to the gamma-glutamyl phosphate reductase family.

It is found in the cytoplasm. The catalysed reaction is L-glutamate 5-semialdehyde + phosphate + NADP(+) = L-glutamyl 5-phosphate + NADPH + H(+). Its pathway is amino-acid biosynthesis; L-proline biosynthesis; L-glutamate 5-semialdehyde from L-glutamate: step 2/2. In terms of biological role, catalyzes the NADPH-dependent reduction of L-glutamate 5-phosphate into L-glutamate 5-semialdehyde and phosphate. The product spontaneously undergoes cyclization to form 1-pyrroline-5-carboxylate. The sequence is that of Gamma-glutamyl phosphate reductase from Laribacter hongkongensis (strain HLHK9).